The primary structure comprises 161 residues: Phosphopantetheine adenylyltransferase (161 aa).

Ser9 is a binding site for substrate. ATP-binding positions include 9-10 (SF) and His17. Substrate-binding residues include Lys41, Leu73, and Lys87. ATP contacts are provided by residues 88-90 (GLR), Glu98, and 122-128 (YSFVSSS).

Belongs to the bacterial CoaD family. As to quaternary structure, homohexamer. Mg(2+) is required as a cofactor.

It localises to the cytoplasm. The catalysed reaction is (R)-4'-phosphopantetheine + ATP + H(+) = 3'-dephospho-CoA + diphosphate. It functions in the pathway cofactor biosynthesis; coenzyme A biosynthesis; CoA from (R)-pantothenate: step 4/5. Reversibly transfers an adenylyl group from ATP to 4'-phosphopantetheine, yielding dephospho-CoA (dPCoA) and pyrophosphate. The chain is Phosphopantetheine adenylyltransferase from Mycobacteroides abscessus (strain ATCC 19977 / DSM 44196 / CCUG 20993 / CIP 104536 / JCM 13569 / NCTC 13031 / TMC 1543 / L948) (Mycobacterium abscessus).